Reading from the N-terminus, the 379-residue chain is Guanine nucleotide-binding protein G(s) subunit alpha (379 aa).

Residues Met1–Lys25 form a disordered region. Gly2 is lipidated: N-palmitoyl glycine. Cys3 carries S-palmitoyl cysteine lipidation. Residues Lys8–Lys25 show a composition bias toward basic and acidic residues. Positions Ala39 to Leu379 constitute a G-alpha domain. A G1 motif region spans residues Arg42–Ser55. Residues Gly47–Ser55, Leu182–Thr189, Asp208–Gln212, Asn277–Asp280, and Ala351 each bind GTP. Ser54 and Thr189 together coordinate Mg(2+). Positions Asp181–Thr189 are G2 motif. The G3 motif stretch occupies residues Phe204–Arg213. The tract at residues Ile273–Asp280 is G4 motif. Positions Thr349 to Thr354 are G5 motif.

Belongs to the G-alpha family. G(s) subfamily. Heterotrimeric G proteins are composed of 3 units; alpha, beta and gamma. The alpha chain contains the guanine nucleotide binding site.

Its subcellular location is the cell membrane. Guanine nucleotide-binding proteins (G proteins) function as transducers in numerous signaling pathways controlled by G protein-coupled receptors (GPCRs). Signaling involves the activation of adenylyl cyclases, resulting in increased levels of the signaling molecule cAMP. GNAS functions downstream of several GPCRs, including beta-adrenergic receptors. Stimulates the Ras signaling pathway. This Xenopus laevis (African clawed frog) protein is Guanine nucleotide-binding protein G(s) subunit alpha (gnas).